A 446-amino-acid polypeptide reads, in one-letter code: Maltoporin (446 aa).

The first 25 residues, 1 to 25 (MMITLRKLPLAVAVAAGVMSAQAMA), serve as a signal peptide directing secretion.

Belongs to the porin LamB (TC 1.B.3) family. In terms of assembly, homotrimer formed of three 18-stranded antiparallel beta-barrels, containing three independent channels.

It localises to the cell outer membrane. The enzyme catalyses beta-maltose(in) = beta-maltose(out). Functionally, involved in the transport of maltose and maltodextrins. The sequence is that of Maltoporin from Escherichia coli O157:H7 (strain EC4115 / EHEC).